Here is a 950-residue protein sequence, read N- to C-terminus: Bifunctional glutamine synthetase adenylyltransferase/adenylyl-removing enzyme (950 aa).

The tract at residues 1 to 440 (MLPLPSELQI…VFDHLIGDDA (440 aa)) is adenylyl removase. Positions 449–950 (HGLYKSLWQD…KWLVAAPSDV (502 aa)) are adenylyl transferase.

The protein belongs to the GlnE family. Requires Mg(2+) as cofactor.

It carries out the reaction [glutamine synthetase]-O(4)-(5'-adenylyl)-L-tyrosine + phosphate = [glutamine synthetase]-L-tyrosine + ADP. It catalyses the reaction [glutamine synthetase]-L-tyrosine + ATP = [glutamine synthetase]-O(4)-(5'-adenylyl)-L-tyrosine + diphosphate. Involved in the regulation of glutamine synthetase GlnA, a key enzyme in the process to assimilate ammonia. When cellular nitrogen levels are high, the C-terminal adenylyl transferase (AT) inactivates GlnA by covalent transfer of an adenylyl group from ATP to specific tyrosine residue of GlnA, thus reducing its activity. Conversely, when nitrogen levels are low, the N-terminal adenylyl removase (AR) activates GlnA by removing the adenylyl group by phosphorolysis, increasing its activity. The regulatory region of GlnE binds the signal transduction protein PII (GlnB) which indicates the nitrogen status of the cell. The polypeptide is Bifunctional glutamine synthetase adenylyltransferase/adenylyl-removing enzyme (Yersinia enterocolitica serotype O:8 / biotype 1B (strain NCTC 13174 / 8081)).